Consider the following 603-residue polypeptide: Putative lipase atg15 (603 aa).

The Cytoplasmic segment spans residues 1-20 (MDQPHRRTRKWHLMDLSVST). A helical; Signal-anchor for type II membrane protein transmembrane segment spans residues 21–41 (LLMSLALVLPSCVSAYQPVYF). At 42–603 (RSQEATPFIP…ITPAPILIDL (562 aa)) the chain is on the lumenal side. 5 N-linked (GlcNAc...) asparagine glycosylation sites follow: Asn166, Asn201, Asn223, Asn281, and Asn305. Ser321 serves as the catalytic Charge relay system. Asn467 is a glycosylation site (N-linked (GlcNAc...) asparagine).

It belongs to the AB hydrolase superfamily. Lipase family. Binds to both phosphatidylinositol (PI) and phosphatidylinositol 3,5-bisphosphate (PIP2).

The protein resides in the endosome. The protein localises to the multivesicular body membrane. It localises to the prevacuolar compartment membrane. The enzyme catalyses a triacylglycerol + H2O = a diacylglycerol + a fatty acid + H(+). In terms of biological role, lipase which is essential for lysis of subvacuolar cytoplasm to vacuole targeted bodies and intravacuolar autophagic bodies. Involved in the lysis of intravacuolar multivesicular body (MVB) vesicles. The intravacuolar membrane disintegration by atg15 is critical to life span extension. This Emericella nidulans (strain FGSC A4 / ATCC 38163 / CBS 112.46 / NRRL 194 / M139) (Aspergillus nidulans) protein is Putative lipase atg15 (atg15).